A 329-amino-acid polypeptide reads, in one-letter code: MASQLTDAFARKFYYLRLSITDVCNFRCTYCLPDGYKPSGVTNKGFLTVDEIRRVTRAFASLGTEKVRLTGGEPSLRRDFTDIIAAVRENDAIRQIAVTTNGYRLERDVANWRDAGLTGINVSVDSLDARQFHAITGQDKFNQVMAGIDAAFEAGFEKVKVNTVLMRDVNHHQLDTFLNWIQHRPIQLRFIELMETGEGIELFRKHHISGQVLRNELLRRGWIHQLRQRSDGPAQVFCHPDYAGEIGLIMPYEKDFCATCNRLRVSSIGKLHLCLFGEGGVNLRDLLEDDTQQQALEARISAALREKKQTHFLHQNNTGITQNLSYIGG.

The region spanning 8–234 is the Radical SAM core domain; that stretch reads AFARKFYYLR…QLRQRSDGPA (227 aa). Arg-17 lines the GTP pocket. Residues Cys-24 and Cys-28 each coordinate [4Fe-4S] cluster. An S-adenosyl-L-methionine-binding site is contributed by Tyr-30. Cys-31 provides a ligand contact to [4Fe-4S] cluster. Residue Arg-68 participates in GTP binding. Gly-72 contributes to the S-adenosyl-L-methionine binding site. A GTP-binding site is contributed by Thr-99. Residue Ser-123 participates in S-adenosyl-L-methionine binding. Lys-160 provides a ligand contact to GTP. Met-194 is an S-adenosyl-L-methionine binding site. Residues Cys-257 and Cys-260 each coordinate [4Fe-4S] cluster. 262-264 provides a ligand contact to GTP; the sequence is RLR. Cys-274 is a [4Fe-4S] cluster binding site.

It belongs to the radical SAM superfamily. MoaA family. As to quaternary structure, monomer and homodimer. The cofactor is [4Fe-4S] cluster.

It carries out the reaction GTP + AH2 + S-adenosyl-L-methionine = (8S)-3',8-cyclo-7,8-dihydroguanosine 5'-triphosphate + 5'-deoxyadenosine + L-methionine + A + H(+). It functions in the pathway cofactor biosynthesis; molybdopterin biosynthesis. In terms of biological role, catalyzes the cyclization of GTP to (8S)-3',8-cyclo-7,8-dihydroguanosine 5'-triphosphate. In Escherichia coli O45:K1 (strain S88 / ExPEC), this protein is GTP 3',8-cyclase.